The following is a 293-amino-acid chain: Bifunctional protein FolD (293 aa).

Residues Gly-162–Ser-164 and Ile-227 contribute to the NADP(+) site.

Belongs to the tetrahydrofolate dehydrogenase/cyclohydrolase family. In terms of assembly, homodimer.

The enzyme catalyses (6R)-5,10-methylene-5,6,7,8-tetrahydrofolate + NADP(+) = (6R)-5,10-methenyltetrahydrofolate + NADPH. It catalyses the reaction (6R)-5,10-methenyltetrahydrofolate + H2O = (6R)-10-formyltetrahydrofolate + H(+). It participates in one-carbon metabolism; tetrahydrofolate interconversion. Its function is as follows. Catalyzes the oxidation of 5,10-methylenetetrahydrofolate to 5,10-methenyltetrahydrofolate and then the hydrolysis of 5,10-methenyltetrahydrofolate to 10-formyltetrahydrofolate. In Metamycoplasma arthritidis (strain 158L3-1) (Mycoplasma arthritidis), this protein is Bifunctional protein FolD.